The sequence spans 284 residues: Bifunctional protein FolD (284 aa).

NADP(+) contacts are provided by residues 165-167 (GRS) and S190.

Belongs to the tetrahydrofolate dehydrogenase/cyclohydrolase family. Homodimer.

It catalyses the reaction (6R)-5,10-methylene-5,6,7,8-tetrahydrofolate + NADP(+) = (6R)-5,10-methenyltetrahydrofolate + NADPH. The enzyme catalyses (6R)-5,10-methenyltetrahydrofolate + H2O = (6R)-10-formyltetrahydrofolate + H(+). It participates in one-carbon metabolism; tetrahydrofolate interconversion. In terms of biological role, catalyzes the oxidation of 5,10-methylenetetrahydrofolate to 5,10-methenyltetrahydrofolate and then the hydrolysis of 5,10-methenyltetrahydrofolate to 10-formyltetrahydrofolate. The polypeptide is Bifunctional protein FolD (Streptococcus mutans serotype c (strain ATCC 700610 / UA159)).